We begin with the raw amino-acid sequence, 336 residues long: uncharacterized protein (336 aa).

A compositionally biased stretch (basic and acidic residues) spans 297–316; the sequence is KKDLQKSEEEEHPNDDHVYM. Residues 297–336 form a disordered region; it reads KKDLQKSEEEEHPNDDHVYMTEEDDMEKIERGIESLGNGH.

This is an uncharacterized protein from Invertebrate iridescent virus 6 (IIV-6).